The sequence spans 323 residues: Phospho-N-acetylmuramoyl-pentapeptide-transferase (323 aa).

9 helical membrane-spanning segments follow: residues 5–25 (SAVL…PSLI), 57–77 (LLFI…QGLI), 81–101 (LWAL…DDSI), 118–138 (LCQV…GFQM), 140–160 (FGTT…IVGF), 173–193 (LVSG…LVNL), 196–216 (PGYP…LGFF), 225–247 (IFMG…LLLH), and 302–322 (IVFW…ILLV).

Belongs to the glycosyltransferase 4 family. MraY subfamily. Mg(2+) serves as cofactor.

It localises to the cell membrane. The enzyme catalyses UDP-N-acetyl-alpha-D-muramoyl-L-alanyl-gamma-D-glutamyl-L-lysyl-D-alanyl-D-alanine + di-trans,octa-cis-undecaprenyl phosphate = Mur2Ac(oyl-L-Ala-gamma-D-Glu-L-Lys-D-Ala-D-Ala)-di-trans,octa-cis-undecaprenyl diphosphate + UMP. It functions in the pathway cell wall biogenesis; peptidoglycan biosynthesis. Catalyzes the initial step of the lipid cycle reactions in the biosynthesis of the cell wall peptidoglycan: transfers peptidoglycan precursor phospho-MurNAc-pentapeptide from UDP-MurNAc-pentapeptide onto the lipid carrier undecaprenyl phosphate, yielding undecaprenyl-pyrophosphoryl-MurNAc-pentapeptide, known as lipid I. This Limosilactobacillus reuteri (strain DSM 20016) (Lactobacillus reuteri) protein is Phospho-N-acetylmuramoyl-pentapeptide-transferase.